Here is a 480-residue protein sequence, read N- to C-terminus: ATP-grasp enzyme ankG (480 aa).

The interval 1–30 (MYQISLKATKSAAEPTSSTDASHDDRQVER) is disordered. Over residues 21–30 (ASHDDRQVER) the composition is skewed to basic and acidic residues.

The catalysed reaction is NK13650 D + L-aspartate + ATP = NK13650 C + AMP + diphosphate + H(+). It catalyses the reaction NK13650 B + L-aspartate + ATP = NK13650 A + AMP + diphosphate + H(+). Its pathway is secondary metabolite biosynthesis. Functionally, ATP-grasp enzyme; part of the ank cluster that mediates the biosynthesis of NK13650 C, a highly modified cyclo-arginine-tyrosine dipeptide. AnkG catalyzes the last step of the pathway via amidation NK13650 D with L-Asp to produce NK13650 C. AnkG also amidates NK13650 B into NK13650 A. Within the pathway, the cyclodipeptide synthase ankA acts as the scaffold-generating enzyme and is responsible for formation of the cyclo-Arg-Tyr diketopiperazine (cRY) from L-Arg and L-Tyr. The ankA product cRY is desaturated by the cytochrome P450 monooxygenase ankB to yield a dehydro-cyclodipeptide intermediate. The FAD-dependent monooxygenase ankC then installs the m-OH, ankD catalyzes the attachment of L-homoserine, and ankE ligates citrate to the ankD product to yield NK13650 B. The O-methyltransferase ankF is responsible for methylation of the C-17 phenol group of NK13650 B to produce NK13650 D. Amidation of NK13650 D with L-Asp by ankG then leads to the production of NK13650 C, whereas amidation of NK13650 B produces NK13650 A. This chain is ATP-grasp enzyme ankG, found in Aspergillus thermomutatus (Neosartorya pseudofischeri).